Consider the following 339-residue polypeptide: MWQLWASLCCLLVLANARSRPSFHPLSDELVNYVNKRNTTWQAGHNFYNVDMSYLKRLCGTFLGGPKPPQRVMFTEDLKLPASFDAREQWPQCPTIKEIRDQGSCGSCWAFGAVEAISDRICIHTNAHVSVEVSAEDLLTCCGSMCGDGCNGGYPAEAWNFWTRKGLVSGGLYESHVGCRPYSIPPCEHHVNGSRPPCTGEGDTPKCSKICEPGYSPTYKQDKHYGYNSYSVSNSEKDIMAEIYKNGPVEGAFSVYSDFLLYKSGVYQHVTGEMMGGHAIRILGWGVENGTPYWLVANSWNTDWGDNGFFKILRGQDHCGIESEVVAGIPRTDQYWEKI.

Positions 1-17 (MWQLWASLCCLLVLANA) are cleaved as a signal peptide. Residues 18–79 (RSRPSFHPLS…QRVMFTEDLK (62 aa)) constitute a propeptide, activation peptide. 6 disulfide bridges follow: cysteine 93-cysteine 122, cysteine 105-cysteine 150, cysteine 141-cysteine 207, cysteine 142-cysteine 146, cysteine 179-cysteine 211, and cysteine 187-cysteine 198. Residue cysteine 108 is part of the active site. Asparagine 192 is a glycosylation site (N-linked (GlcNAc...) asparagine). At lysine 220 the chain carries N6-acetyllysine. Active-site residues include histidine 278 and asparagine 298. Residues 334 to 339 (QYWEKI) constitute a propeptide that is removed on maturation.

This sequence belongs to the peptidase C1 family. In terms of assembly, dimer of a heavy chain and a light chain cross-linked by a disulfide bond. Interacts with SRPX2. Directly interacts with SHKBP1. In terms of tissue distribution, expressed in the stratum spinosum of the epidermis. Weak expression is detected in the stratum granulosum.

Its subcellular location is the lysosome. The protein resides in the melanosome. It localises to the secreted. The protein localises to the extracellular space. It is found in the apical cell membrane. The catalysed reaction is Hydrolysis of proteins with broad specificity for peptide bonds. Preferentially cleaves -Arg-Arg-|-Xaa bonds in small molecule substrates (thus differing from cathepsin L). In addition to being an endopeptidase, shows peptidyl-dipeptidase activity, liberating C-terminal dipeptides.. Inhibited by leupeptin. Its function is as follows. Thiol protease which is believed to participate in intracellular degradation and turnover of proteins. Cleaves matrix extracellular phosphoglycoprotein MEPE. Involved in the solubilization of cross-linked TG/thyroglobulin in the thyroid follicle lumen. Has also been implicated in tumor invasion and metastasis. In Homo sapiens (Human), this protein is Cathepsin B (CTSB).